The following is a 212-amino-acid chain: Protein GrpE (212 aa).

Residues 1-68 (MAETSNNKTS…ELESAKKEIE (68 aa)) form a disordered region. Basic and acidic residues predominate over residues 9–30 (TSEEAKANEKKSQSETLEESKL). A compositionally biased stretch (low complexity) spans 40–60 (ETTQTESMETAETETSLQTEL).

This sequence belongs to the GrpE family. As to quaternary structure, homodimer.

Its subcellular location is the cytoplasm. Participates actively in the response to hyperosmotic and heat shock by preventing the aggregation of stress-denatured proteins, in association with DnaK and GrpE. It is the nucleotide exchange factor for DnaK and may function as a thermosensor. Unfolded proteins bind initially to DnaJ; upon interaction with the DnaJ-bound protein, DnaK hydrolyzes its bound ATP, resulting in the formation of a stable complex. GrpE releases ADP from DnaK; ATP binding to DnaK triggers the release of the substrate protein, thus completing the reaction cycle. Several rounds of ATP-dependent interactions between DnaJ, DnaK and GrpE are required for fully efficient folding. The chain is Protein GrpE from Leptospira interrogans serogroup Icterohaemorrhagiae serovar copenhageni (strain Fiocruz L1-130).